The chain runs to 169 residues: PTS system glucose-specific EIIA component (169 aa).

Residues 39 to 143 (DVVFAEKIVG…STLTPVVISN (105 aa)) form the PTS EIIA type-1 domain. Zn(2+) is bound by residues His76 and His91. Catalysis depends on His91, which acts as the Tele-phosphohistidine intermediate; for EIIA activity. Residue His91 is modified to Phosphohistidine; by HPr.

Heterodimer with glycerol kinase (glpk). Zn(2+) is required as a cofactor.

It localises to the cytoplasm. In terms of biological role, the phosphoenolpyruvate-dependent sugar phosphotransferase system (sugar PTS), a major carbohydrate active transport system, catalyzes the phosphorylation of incoming sugar substrates concomitantly with their translocation across the cell membrane. The enzyme II complex composed of PtsG and Crr is involved in glucose transport. The protein is PTS system glucose-specific EIIA component (crr) of Escherichia coli O6:H1 (strain CFT073 / ATCC 700928 / UPEC).